We begin with the raw amino-acid sequence, 1938 residues long: MSFKEAKPGERGKNPEDHGRKQAASWMNGMEAANQPSTSAEKKSHHWRSYKLIIDPALRKGQQKLYRYDGLSFSMPNSGAPPVDSVRDPRIGRIWTKTKELDLPVPKLKIDEFYVGPVPPKQVTFAKLNDNIRENFLGDMCKKYGEVEEVEILYNPKNKKHLGIAKVIFATVKGAKDAVKHLHNTSVMGNIIHAELDTKGETRMRFYELLVNGYYTPQTLPVGSDLDASPTVNETPQVVEPVKRTKETAVGASVTPNSSTPFSHDTAYSSSRQGTPNSYSQFTPQSQGTPHTPRLGTPFSQDSSYSSRQTTPAFHYGQDSSFKPRRHENKFTDAYNRRPGHHYVHSSGSYRGPENTFNVTRPQAETVQFPRTPPLSHSSGNNKSAFSPYQGSTVFPQTDDNQYPQTSRDMEYRRTGPPTSDSYSDGSLELKLVKEKPEEPPPPEPDSTTEQKASFAQTPERCATPGTPTLEAEMQHDSLDTRIAMLLKEQRTQLHLISSDQNSDSEIRMEGSPISSSSSQLSPIPPYSSSSHYQDVTPSSRPSSTGLEDISPTPLPDSDDDEPIPGTASLCQNSRSASPIDQINQPVRKMETLDNKELVVGDETPTSEKMDEGHPSSGEDMEISDDEVTPSPITSAECAITSSSVIPILPPGFPPLPPPPPPQSGFPMPPPLPPPPPPTHPSVTVPPPPLPAPPGVPPHHILHHPPPYHHFPVMQGEMMNVLGNHWGGMTMSFQMQTQMLSRMMQGQGSYPYHHFMGGSMQFGNQLPYRPFALSAHLSRGQPWPPLPKFDPSVPPPGYEPKKEDPHKATVDGVLQVIVKELKAIMKRDLNRKMVEVVAFRAFDEWWDKKERLAKQSLTPVKSGESKDEDKQKTKEHITSSLLESWNKGEGLGFEGIGLGIGLRGAIRLPSFKVKRKEPPDAALAGDQKRIRPSHSVDDEDEESERDRDISGTASDLSKKDADAVNIRRRPARPLDSEGEEEVESEGDDGETSDKEAFEKEDQDAGSVSALSSKKRLYGEKEDEEDETQSSGKEEDLVSEEEDITSVASSRAEMDSSDESDESSEYESSSDSDDEIEEEDDDDEEEELVFEDDQSEELDLGQEDYIETDREEDFFKEDVSECSSPVKAEADMELEDDDVQKLEQDVAHQTAQDTSHLRKKDLDVPLVESKEHKQDTFDKMERLSAVPMQQNVFKEHEKAPSPMNEEEEYIELRLEPVPLVPDNAPPAVQEPMIIRPLTPTGAFGESGPVLKLEEPKLQVNLAHFVAEDEDLYPRTPGRDTAAHSDTEVTFQPGLKVAPSSLPLLQSHNKEEECLLPPEKHTGHLKVTKTLSEEELPRTPGRDILVKSSHLGKSQSTETIPATPGSDAPLTGNSLTLTSPHIPGSPFSYLSQSPGIINSGIPRTPGRDFNFTPIFPESNSIFPSHPSGKKSSVDEPDEKSFKEPTSASLTMNSVPSPIPFASPPRGVPHMDIRLETDDLESSDTQAYLSDKLLSEESECEFTKGQLPSTDESAPSPPFPPTDKRKGPKKPLAAHEFEACVALSEGALGKQLFIGQPDSVSGIKDPAAVPLDFRNDGLSENTVHDPIIQKVPLKELENQWNEVLKEEEEDISKHKKSRNSRLNKLYDEFSTLPSPEYSPPRAMFKPRSEFEEMTILYDIWNGGIDDEDMKYMCITYDRLLQQDNGMDWLNDTLWVYHPPTSVYSPKKKKRDDGLREHVTGCARSEGYYKIDKKDKLKYLINNRSLADEPPIDTQGKSIPAQPQASTRAGSERRSEQRRLLSSFTGSCDSDLLKFNQLKFRKKKIRFCKSHIHDWGLFAMEPIVADEMVIEYVGQNIRQVIADMREKRYEDEGIGSSYMFRVDHDTIIDATKCGNFARFINHSCNPNCYAKVVTVESQKKIVIYSKQYINVNEEITYDYKFPIEDVKIPCLCGAENCRGTLN.

Positions 1–20 are enriched in basic and acidic residues; the sequence is MSFKEAKPGERGKNPEDHGR. The interval 1–44 is disordered; it reads MSFKEAKPGERGKNPEDHGRKQAASWMNGMEAANQPSTSAEKKS. An RRM domain is found at 111 to 199; sequence DEFYVGPVPP…NIIHAELDTK (89 aa). 11 disordered regions span residues 226 to 357, 369 to 484, 496 to 630, 652 to 688, 916 to 1125, 1147 to 1174, 1187 to 1206, 1327 to 1373, 1413 to 1468, 1496 to 1528, and 1744 to 1772; these read LDAS…ENTF, FPRT…TRIA, LISS…EVTP, GFPPLPPPPPPQSGFPMPPPLPPPPPPTHPSVTVPPP, KEPP…SSPV, HQTAQDTSHLRKKDLDVPLVESKEHKQD, MQQNVFKEHEKAPSPMNEEE, KTLS…GNSL, FPES…VPHM, ECEFTKGQLPSTDESAPSPPFPPTDKRKGPKKP, and DEPPIDTQGKSIPAQPQASTRAGSERRSE. Composition is skewed to polar residues over residues 254 to 290, 298 to 312, 375 to 407, and 446 to 457; these read VTPNSSTPFSHDTAYSSSRQGTPNSYSQFTPQSQGTP, PFSQDSSYSSRQTTP, LSHSSGNNKSAFSPYQGSTVFPQTDDNQYPQTS, and DSTTEQKASFAQ. Residues 512–531 are compositionally biased toward low complexity; that stretch reads SPISSSSSQLSPIPPYSSSS. Polar residues-rich tracts occupy residues 532–546 and 569–585; these read HYQDVTPSSRPSSTG and SLCQNSRSASPIDQINQ. Over residues 588–599 the composition is skewed to basic and acidic residues; that stretch reads RKMETLDNKELV. Acidic residues predominate over residues 619-628; it reads EDMEISDDEV. Acidic residues-rich tracts occupy residues 976–990 and 1054–1114; these read SEGEEEVESEGDDGE and DSSD…EDFF. The span at 1159–1174 shows a compositional bias: basic and acidic residues; sequence KDLDVPLVESKEHKQD. The span at 1329 to 1343 shows a compositional bias: basic and acidic residues; sequence LSEEELPRTPGRDIL. Composition is skewed to polar residues over residues 1349–1358 and 1441–1453; these read LGKSQSTETI and EPTSASLTMNSVP. The span at 1454-1464 shows a compositional bias: pro residues; sequence SPIPFASPPRG. A compositionally biased stretch (polar residues) spans 1751 to 1765; it reads QGKSIPAQPQASTRA. Residues 1770–1775 carry the RxxxRR motif motif; sequence RSEQRR. Residues 1799–1916 enclose the SET domain; the sequence is KKIRFCKSHI…VNEEITYDYK (118 aa). S-adenosyl-L-methionine is bound at residue Tyr1915. The region spanning 1922–1938 is the Post-SET domain; sequence VKIPCLCGAENCRGTLN.

This sequence belongs to the class V-like SAM-binding methyltransferase superfamily. In terms of assembly, component of the SET1B/COMPASS complex.

The protein localises to the nucleus speckle. It localises to the chromosome. The catalysed reaction is L-lysyl(4)-[histone H3] + 3 S-adenosyl-L-methionine = N(6),N(6),N(6)-trimethyl-L-lysyl(4)-[histone H3] + 3 S-adenosyl-L-homocysteine + 3 H(+). Its function is as follows. Histone methyltransferase that specifically methylates 'Lys-4' of histone H3, when part of the SET1 histone methyltransferase (HMT) complex, but not if the neighboring 'Lys-9' residue is already methylated. H3 'Lys-4' methylation represents a specific tag for epigenetic transcriptional activation. The polypeptide is Histone-lysine N-methyltransferase SETD1B (setd1b) (Xenopus laevis (African clawed frog)).